A 709-amino-acid chain; its full sequence is Elongation factor G (709 aa).

The tr-type G domain maps to 6-295 (KFLRNIGIMA…AVCTYLPSPL (290 aa)). Residues 15 to 22 (AHIDAGKT), 92 to 96 (DTPGH), and 146 to 149 (NKMD) contribute to the GTP site.

The protein belongs to the TRAFAC class translation factor GTPase superfamily. Classic translation factor GTPase family. EF-G/EF-2 subfamily.

The protein resides in the cytoplasm. Its function is as follows. Catalyzes the GTP-dependent ribosomal translocation step during translation elongation. During this step, the ribosome changes from the pre-translocational (PRE) to the post-translocational (POST) state as the newly formed A-site-bound peptidyl-tRNA and P-site-bound deacylated tRNA move to the P and E sites, respectively. Catalyzes the coordinated movement of the two tRNA molecules, the mRNA and conformational changes in the ribosome. The polypeptide is Elongation factor G (Amoebophilus asiaticus (strain 5a2)).